Reading from the N-terminus, the 112-residue chain is cAMP-regulated phosphoprotein 19 (112 aa).

An N-acetylmethionine modification is found at Met1. Residues 1–11 (MSAEVPEAASA) show a composition bias toward low complexity. Residues 1–49 (MSAEVPEAASAEEQKEMEDKVTSPEKAEEAKLKARYPHLGQKPGGSDFL) are disordered. Ser2 bears the N-acetylserine mark. 2 positions are modified to phosphoserine: Ser2 and Ser23. Residues 12–32 (EEQKEMEDKVTSPEKAEEAKL) show a composition bias toward basic and acidic residues. Phosphoserine; by GWL occurs at positions 62 and 104. The tract at residues 73–112 (KNKQLPTAAPDKTEVTGDHIPTPQDLPQRKPSLVASKLAG) is disordered. Ser104 carries the post-translational modification Phosphoserine; by PKA. Position 109 is an N6-acetyllysine (Lys109).

The protein belongs to the endosulfine family. Interacts (when phosphorylated at Ser-62) with PPP2R2D. Interacts with SNCA. Interacts with PPP2R2A; the interaction is direct and this interaction inhibits PP2A activity. In terms of processing, phosphorylation at Ser-62 by MASTL/GWL during mitosis is essential for interaction with PPP2R2D (PR55-delta) and subsequent inactivation of PP2A. Phosphorylated by PKA.

It is found in the cytoplasm. Functionally, protein phosphatase inhibitor that specifically inhibits protein phosphatase 2A (PP2A) during mitosis. Inhibition of PP2A is enhanced when ARPP19 is phosphorylated. When phosphorylated at Ser-62 during mitosis, specifically interacts with PPP2R2D (PR55-delta) and inhibits its activity, leading to inactivation of PP2A, an essential condition to keep cyclin-B1-CDK1 activity high during M phase. May indirectly enhance GAP-43 expression. The sequence is that of cAMP-regulated phosphoprotein 19 (ARPP19) from Homo sapiens (Human).